We begin with the raw amino-acid sequence, 122 residues long: Ferredoxin (122 aa).

Positions 1 to 33 (MSHDRRLTVGSLLPNQPRPVAVPKAPSVVQPSK) are disordered. The interval 8 to 14 (TVGSLLP) is targeting peptide. The 83-residue stretch at 40–122 (AIIRLEQNGR…FRLACQANME (83 aa)) folds into the 2Fe-2S ferredoxin-type domain. [2Fe-2S] cluster is bound by residues C75, C80, C83, and C117.

The protein belongs to the 2Fe2S plant-type ferredoxin family. [2Fe-2S] cluster serves as cofactor.

Its subcellular location is the encapsulin nanocompartment. Its function is as follows. Cargo protein of a type 1 encapsulin nanocompartment. An iron-binding protein probably involved in iron mineralization in the encapsulin nanocompartment. 2 different cargo proteins have been identified (IMEF and Fer); when both are expressed in E.coli with the shell protein only IMEF is detected within the nanocompartment. E.coli expressing all 3 genes stores the largest amount of iron and is protected from Fe/H2O2-induced oxidative stress. This Bacillus thermotolerans (Quasibacillus thermotolerans) protein is Ferredoxin.